Reading from the N-terminus, the 336-residue chain is Dihydroorotate dehydrogenase (quinone) (336 aa).

FMN is bound by residues 62-66 (AGLDK) and T86. K66 provides a ligand contact to substrate. Residue 111–115 (NRMGF) participates in substrate binding. Positions 139 and 172 each coordinate FMN. Substrate is bound at residue N172. The active-site Nucleophile is the S175. N177 is a binding site for substrate. The FMN site is built by K217 and T245. A substrate-binding site is contributed by 246–247 (NT). FMN is bound by residues G268, G297, and 318-319 (YS).

The protein belongs to the dihydroorotate dehydrogenase family. Type 2 subfamily. Monomer. Requires FMN as cofactor.

The protein resides in the cell membrane. The enzyme catalyses (S)-dihydroorotate + a quinone = orotate + a quinol. Its pathway is pyrimidine metabolism; UMP biosynthesis via de novo pathway; orotate from (S)-dihydroorotate (quinone route): step 1/1. Catalyzes the conversion of dihydroorotate to orotate with quinone as electron acceptor. The protein is Dihydroorotate dehydrogenase (quinone) of Vibrio vulnificus (strain CMCP6).